The primary structure comprises 386 residues: Succinate--CoA ligase [ADP-forming] subunit beta (386 aa).

Positions K9–E244 constitute an ATP-grasp domain. Residues K46, G53–G55, E99, A102, and E107 contribute to the ATP site. Residues N199 and D213 each coordinate Mg(2+). Substrate-binding positions include N264 and G321–M323.

Belongs to the succinate/malate CoA ligase beta subunit family. Heterotetramer of two alpha and two beta subunits. Requires Mg(2+) as cofactor.

The catalysed reaction is succinate + ATP + CoA = succinyl-CoA + ADP + phosphate. It catalyses the reaction GTP + succinate + CoA = succinyl-CoA + GDP + phosphate. Its pathway is carbohydrate metabolism; tricarboxylic acid cycle; succinate from succinyl-CoA (ligase route): step 1/1. Succinyl-CoA synthetase functions in the citric acid cycle (TCA), coupling the hydrolysis of succinyl-CoA to the synthesis of either ATP or GTP and thus represents the only step of substrate-level phosphorylation in the TCA. The beta subunit provides nucleotide specificity of the enzyme and binds the substrate succinate, while the binding sites for coenzyme A and phosphate are found in the alpha subunit. The polypeptide is Succinate--CoA ligase [ADP-forming] subunit beta (Bordetella petrii (strain ATCC BAA-461 / DSM 12804 / CCUG 43448)).